We begin with the raw amino-acid sequence, 407 residues long: Putative ammonium transporter MTH_661 (407 aa).

Transmembrane regions (helical) follow at residues 9–29 (AWML…VAMF), 47–67 (FVSL…LIFG), 70–90 (VSGI…GSAS), 101–121 (FAIF…GAVV), 129–149 (WILF…HWVW), 162–182 (FAGG…LALV), 196–216 (LGYS…FNAG), 226–246 (ANAM…WILM), 257–277 (LGAL…AGFV), 279–299 (IGAS…AVSW), 312–332 (VFGI…LFAV), and 357–377 (IGVV…AMLL).

It belongs to the ammonia transporter channel (TC 1.A.11.2) family.

Its subcellular location is the cell membrane. The protein is Putative ammonium transporter MTH_661 of Methanothermobacter thermautotrophicus (strain ATCC 29096 / DSM 1053 / JCM 10044 / NBRC 100330 / Delta H) (Methanobacterium thermoautotrophicum).